Here is an 879-residue protein sequence, read N- to C-terminus: uncharacterized protein (879 aa).

Residues 14-34 form a helical membrane-spanning segment; the sequence is LAFFGCGVSVGAFFTLFLMGT.

It localises to the membrane. This is an uncharacterized protein from Mycoplasma pneumoniae (strain ATCC 29342 / M129 / Subtype 1) (Mycoplasmoides pneumoniae).